Consider the following 568-residue polypeptide: Glucose-6-phosphate isomerase, cytosolic 1 (568 aa).

Glutamate 360 functions as the Proton donor in the catalytic mechanism. Residues histidine 391 and lysine 516 contribute to the active site.

The protein belongs to the GPI family. As to quaternary structure, homodimer.

The protein localises to the cytoplasm. The catalysed reaction is alpha-D-glucose 6-phosphate = beta-D-fructose 6-phosphate. Its pathway is carbohydrate degradation; glycolysis; D-glyceraldehyde 3-phosphate and glycerone phosphate from D-glucose: step 2/4. This Clarkia arcuata (Glandular clarkia) protein is Glucose-6-phosphate isomerase, cytosolic 1 (PGIC1).